The chain runs to 339 residues: Uroporphyrinogen decarboxylase (339 aa).

Substrate is bound by residues 23-27, aspartate 72, tyrosine 147, threonine 202, and histidine 315; that span reads RQAGR.

This sequence belongs to the uroporphyrinogen decarboxylase family. As to quaternary structure, homodimer.

It is found in the cytoplasm. The enzyme catalyses uroporphyrinogen III + 4 H(+) = coproporphyrinogen III + 4 CO2. It participates in porphyrin-containing compound metabolism; protoporphyrin-IX biosynthesis; coproporphyrinogen-III from 5-aminolevulinate: step 4/4. In terms of biological role, catalyzes the decarboxylation of four acetate groups of uroporphyrinogen-III to yield coproporphyrinogen-III. In Geotalea daltonii (strain DSM 22248 / JCM 15807 / FRC-32) (Geobacter daltonii), this protein is Uroporphyrinogen decarboxylase.